The chain runs to 976 residues: Alpha-amylase (976 aa).

Residues 1–33 (MKRGKLWGRLVSAAGLSLSIFLSSIGNVSTAYA) form the signal peptide. The interval 45–98 (TKENTESATDASSNEASDAEADNDTDEAITDASSKELSAENDGASESDSSFDEY) is disordered. Residues 50-60 (ESATDASSNEA) are compositionally biased toward low complexity. Composition is skewed to acidic residues over residues 61-73 (SDAE…DEAI) and 87-96 (GASESDSSFD). Ca(2+)-binding residues include N243, T284, and D293. Residue D323 is the Nucleophile of the active site. H327 contributes to the Ca(2+) binding site. E375 (proton donor) is an active-site residue.

Belongs to the glycosyl hydrolase 13 family. In terms of assembly, monomer. The cofactor is Ca(2+).

It carries out the reaction Endohydrolysis of (1-&gt;4)-alpha-D-glucosidic linkages in polysaccharides containing three or more (1-&gt;4)-alpha-linked D-glucose units.. The protein is Alpha-amylase (amyA) of Butyrivibrio fibrisolvens.